The following is a 104-amino-acid chain: Large ribosomal subunit protein bL21 (104 aa).

The protein belongs to the bacterial ribosomal protein bL21 family. In terms of assembly, part of the 50S ribosomal subunit. Contacts protein L20.

Its function is as follows. This protein binds to 23S rRNA in the presence of protein L20. This is Large ribosomal subunit protein bL21 from Nitrosococcus oceani (strain ATCC 19707 / BCRC 17464 / JCM 30415 / NCIMB 11848 / C-107).